The primary structure comprises 184 residues: DOMON domain-containing protein CBG21755 (184 aa).

The N-terminal stretch at 1-20 (MIVPISLLFLFLSFVPFSYS) is a signal peptide. Residues 28–145 (EVASMSWMVK…CVNWIVVPGG (118 aa)) enclose the DOMON domain. The N-linked (GlcNAc...) asparagine glycan is linked to Asn49.

It localises to the secreted. The protein is DOMON domain-containing protein CBG21755 of Caenorhabditis briggsae.